The chain runs to 951 residues: Multiple C2 and transmembrane domain-containing protein 1 (951 aa).

Disordered stretches follow at residues 29–79 (LGVG…RWSG), 92–117 (SSSQ…AEQG), 129–198 (LPVA…QKSS), and 210–231 (LEPA…ALQK). The segment covering 31 to 43 (VGKGKGGGGGRAG) has biased composition (gly residues). A compositionally biased stretch (low complexity) spans 147–168 (PGGRSPDSAPSSSSASSSLSSS). Positions 174–184 (RGDRVRDESTR) are enriched in basic and acidic residues. Low complexity predominate over residues 219–228 (PARGPAEPQA). 3 C2 domains span residues 240-358 (KIST…DVTL), 404-521 (QTQS…KLEL), and 555-676 (QKER…AYVL). Ca(2+) is bound by residues Asp275, Asp281, Asp328, Asp330, Asp336, Asp438, Asp444, Asp491, Asp493, Asp499, Asp594, Asp600, Asp646, Asp648, and Asp654. 2 helical membrane passes run 763 to 783 (FVLF…LLLL) and 866 to 886 (PFLS…LYFI).

The protein belongs to the MCTP family. Ca(2+) serves as cofactor.

Its subcellular location is the cytoplasmic vesicle. It is found in the secretory vesicle. The protein localises to the synaptic vesicle membrane. The protein resides in the recycling endosome. It localises to the endoplasmic reticulum membrane. Calcium sensor which is essential for the stabilization of normal baseline neurotransmitter release and for the induction and long-term maintenance of presynaptic homeostatic plasticity. The sequence is that of Multiple C2 and transmembrane domain-containing protein 1 from Mus musculus (Mouse).